The following is a 213-amino-acid chain: Orotate phosphoribosyltransferase (213 aa).

K26 contacts 5-phospho-alpha-D-ribose 1-diphosphate. Residue 34–35 (FF) coordinates orotate. Residues 72-73 (YK), R98, K99, K102, H104, and 123-131 (DDVISAGTS) contribute to the 5-phospho-alpha-D-ribose 1-diphosphate site. Orotate is bound by residues S127 and R155.

It belongs to the purine/pyrimidine phosphoribosyltransferase family. PyrE subfamily. Homodimer. The cofactor is Mg(2+).

The enzyme catalyses orotidine 5'-phosphate + diphosphate = orotate + 5-phospho-alpha-D-ribose 1-diphosphate. The protein operates within pyrimidine metabolism; UMP biosynthesis via de novo pathway; UMP from orotate: step 1/2. Its function is as follows. Catalyzes the transfer of a ribosyl phosphate group from 5-phosphoribose 1-diphosphate to orotate, leading to the formation of orotidine monophosphate (OMP). The protein is Orotate phosphoribosyltransferase of Laribacter hongkongensis (strain HLHK9).